We begin with the raw amino-acid sequence, 277 residues long: 3-methyl-2-oxobutanoate hydroxymethyltransferase (277 aa).

Mg(2+)-binding residues include Asp-53 and Asp-96. Residues 53-54 (DS), Asp-96, and Lys-126 contribute to the 3-methyl-2-oxobutanoate site. Glu-128 contacts Mg(2+). Glu-195 (proton acceptor) is an active-site residue.

This sequence belongs to the PanB family. In terms of assembly, homodecamer; pentamer of dimers. The cofactor is Mg(2+).

It is found in the cytoplasm. It carries out the reaction 3-methyl-2-oxobutanoate + (6R)-5,10-methylene-5,6,7,8-tetrahydrofolate + H2O = 2-dehydropantoate + (6S)-5,6,7,8-tetrahydrofolate. It participates in cofactor biosynthesis; (R)-pantothenate biosynthesis; (R)-pantoate from 3-methyl-2-oxobutanoate: step 1/2. In terms of biological role, catalyzes the reversible reaction in which hydroxymethyl group from 5,10-methylenetetrahydrofolate is transferred onto alpha-ketoisovalerate to form ketopantoate. The polypeptide is 3-methyl-2-oxobutanoate hydroxymethyltransferase (Prosthecochloris aestuarii (strain DSM 271 / SK 413)).